The following is a 528-amino-acid chain: G protein-coupled receptor 161 (528 aa).

Over 1 to 30 (MSLNSSLGHRKELSNLTEGASDQGGSGVTE) the chain is Extracellular. Asparagine 4 and asparagine 15 each carry an N-linked (GlcNAc...) asparagine glycan. A helical transmembrane segment spans residues 31–51 (FVAIVIITVFVCLGNLVIVIT). The Cytoplasmic portion of the chain corresponds to 52–64 (LYRKSYLLTLSNK). The helical transmembrane segment at 65 to 85 (FVFSLTLSNFLLSVLVLPFVV) threads the bilayer. Topologically, residues 86 to 101 (TSSIRREWIFGVVWCN) are extracellular. Cysteine 100 and cysteine 178 are disulfide-bonded. The N-linked (GlcNAc...) asparagine glycan is linked to asparagine 101. A helical membrane pass occupies residues 102–122 (FSALLYLLISSASMLTLGIIA). The Cytoplasmic portion of the chain corresponds to 123-143 (VDRYYAVLYPMAYPMKITGNR). Residues 144 to 164 (AVMVLAYIWLHSLIGCLPPLF) traverse the membrane as a helical segment. At 165 to 190 (GWSSVEFDEFKWMCVAAWHREPGYTA) the chain is on the extracellular side. A helical transmembrane segment spans residues 191–211 (FWQIWCALLPFLVMLVCYGFI). Residues 212-269 (FRVARVKARKVHCGAVVTVEVGVQRTGRKNSSTSTSSSGSRKSAFQGVVYSANQCKAL) are Cytoplasmic-facing. Residues 270 to 290 (VTILVVIGAFMVTWGPYMVVI) form a helical membrane-spanning segment. The Extracellular portion of the chain corresponds to 291–306 (TSEALWGKNCVSPTLE). Residues 307-327 (TWATWLSFTSAICHPLIYGLW) traverse the membrane as a helical segment. Residues 328–528 (NKTVRKELLG…EGDVLATEQR (201 aa)) lie on the Cytoplasmic side of the membrane.

Belongs to the G-protein coupled receptor 1 family.

The protein resides in the cell projection. It is found in the cilium membrane. The protein localises to the cell membrane. Functionally, key negative regulator of Shh signaling, which promotes the processing of GLI3 into GLI3R during neural tube development. Recruited by TULP3 and the IFT-A complex to primary cilia and acts as a regulator of the PKA-dependent basal repression machinery in Shh signaling by increasing cAMP levels, leading to promote the PKA-dependent processing of GLI3 into GLI3R and repress the Shh signaling. In presence of SHH, it is removed from primary cilia and is internalized into recycling endosomes, preventing its activity and allowing activation of the Shh signaling. Its ligand is unknown. The sequence is that of G protein-coupled receptor 161 (GPR161) from Bos taurus (Bovine).